We begin with the raw amino-acid sequence, 128 residues long: Group 2 truncated hemoglobin GlbO (128 aa).

Positions 23-36 form a cross-link, isodityrosine (Tyr-Tyr); sequence YAQVAEDEVLRRVY. 3',4'-dihydroxyphenylalanine is present on Tyr36. His75 serves as a coordination point for heme.

The protein belongs to the truncated hemoglobin family. Group II subfamily. As to quaternary structure, homododecamer. Requires heme as cofactor. Post-translationally, contains L-DOPA (3',4'-dihydroxyphenylalanine).

This is Group 2 truncated hemoglobin GlbO (glbO) from Mycobacterium bovis (strain ATCC BAA-935 / AF2122/97).